A 124-amino-acid polypeptide reads, in one-letter code: Small ribosomal subunit protein uS12 (124 aa).

The residue at position 89 (Asp89) is a 3-methylthioaspartic acid.

It belongs to the universal ribosomal protein uS12 family. In terms of assembly, part of the 30S ribosomal subunit. Contacts proteins S8 and S17. May interact with IF1 in the 30S initiation complex.

In terms of biological role, with S4 and S5 plays an important role in translational accuracy. Functionally, interacts with and stabilizes bases of the 16S rRNA that are involved in tRNA selection in the A site and with the mRNA backbone. Located at the interface of the 30S and 50S subunits, it traverses the body of the 30S subunit contacting proteins on the other side and probably holding the rRNA structure together. The combined cluster of proteins S8, S12 and S17 appears to hold together the shoulder and platform of the 30S subunit. In Aliivibrio fischeri (strain ATCC 700601 / ES114) (Vibrio fischeri), this protein is Small ribosomal subunit protein uS12.